A 444-amino-acid polypeptide reads, in one-letter code: Sprouty-related, EVH1 domain-containing protein 1 (444 aa).

The residue at position 2 (Ser-2) is an N-acetylserine. Residues 6 to 123 (ATSDNDNSYA…RGIRRAIEDI (118 aa)) enclose the WH1 domain. Lys-225 bears the N6-methyllysine mark. Residues 234–286 (SIRHVSFQDEDEIVRINPRDILIRRYADYRHPDMWKNDLERDDTDSSVPFSKQ) form the KBD domain. Ser-239 is subject to Phosphoserine. The segment at 268-287 (WKNDLERDDTDSSVPFSKQD) is disordered. Ser-309 is subject to Phosphoserine. A required for interaction with TESK1 region spans residues 333-444 (SRCVYCQERF…CCGGKHKAAG (112 aa)). In terms of domain architecture, SPR spans 334–442 (RCVYCQERFN…CGCCGGKHKA (109 aa)).

As to quaternary structure, homodimer and heterodimer. Able to interact with SPRED2 to form heterodimers. Interacts (via C-terminus) with TAOK1/MARKK (via C-terminus); the interaction does not affect TAOK1 kinase activity. Interacts (via C-terminus) with TESK1 (via C-terminus); the interaction inhibits TESK1 kinase activity. Interacts with CAV1. Interacts with RAS. Interacts with palmitoyltransferase ZDHHC17/HIP14; the interaction leads to palmitoylation of SPRED1. Post-translationally, palmitoylated by ZDHHC17/HIP14. In terms of processing, ubiquitinated. Phosphorylated on tyrosine. As to expression, expressed in brain. Weakly expressed in lung, heart, liver, kidney, intestine, spleen, testis, thymus, colon and ovary. Also expressed in embryonic tissues such as heart, lung, liver and brain. Highly expressed in IL3-dependent hematopoietic cell lines (Ba/F3 and MC/9) and bone marrow-derived mast cells (BMMC).

The protein localises to the cell membrane. It localises to the membrane. It is found in the caveola. Its subcellular location is the nucleus. Functionally, tyrosine kinase substrate that inhibits growth-factor-mediated activation of MAP kinase. Negatively regulates hematopoiesis of bone marrow. Inhibits fibroblast growth factor (FGF)-induced retinal lens fiber differentiation, probably by inhibiting FGF-mediated phosphorylation of ERK1/2. Attenuates actin stress fiber formation via inhibition of TESK1-mediated phosphorylation of cofilin. Inhibits TGFB-induced epithelial-to-mesenchymal transition in lens epithelial cells. This Mus musculus (Mouse) protein is Sprouty-related, EVH1 domain-containing protein 1 (Spred1).